A 359-amino-acid chain; its full sequence is MAP kinase-activated protein kinase 2 (359 aa).

The region spanning 20 to 281 is the Protein kinase domain; sequence VTSNTVLGYG…IQDVISNKWI (262 aa). Residues 26 to 34 and K49 each bind ATP; that span reads LGYGINGKV. The Proton acceptor role is filled by D142.

The protein belongs to the protein kinase superfamily. CAMK Ser/Thr protein kinase family. Post-translationally, phosphorylated and activated by MAP kinase.

It catalyses the reaction L-seryl-[protein] + ATP = O-phospho-L-seryl-[protein] + ADP + H(+). It carries out the reaction L-threonyl-[protein] + ATP = O-phospho-L-threonyl-[protein] + ADP + H(+). Functionally, its physiological substrate seems to be the small heat shock protein (HSP27/HSP25). This Drosophila melanogaster (Fruit fly) protein is MAP kinase-activated protein kinase 2 (MAPk-Ak2).